The sequence spans 340 residues: 7,8-didemethyl-8-hydroxy-5-deazariboflavin synthase (340 aa).

Residues 25-256 (ATYSPAYTIV…SDITIQIPPN (232 aa)) form the Radical SAM core domain. [4Fe-4S] cluster-binding residues include Cys39, Cys43, and Cys46.

The protein belongs to the radical SAM superfamily. CofG family. In terms of assembly, consists of two subunits, CofG and CofH. The cofactor is [4Fe-4S] cluster.

The catalysed reaction is 5-amino-5-(4-hydroxybenzyl)-6-(D-ribitylimino)-5,6-dihydrouracil + S-adenosyl-L-methionine = 7,8-didemethyl-8-hydroxy-5-deazariboflavin + 5'-deoxyadenosine + L-methionine + NH4(+) + H(+). It participates in cofactor biosynthesis; coenzyme F0 biosynthesis. Its function is as follows. Catalyzes the radical-mediated synthesis of 7,8-didemethyl-8-hydroxy-5-deazariboflavin from 5-amino-5-(4-hydroxybenzyl)-6-(D-ribitylimino)-5,6-dihydrouracil. The sequence is that of 7,8-didemethyl-8-hydroxy-5-deazariboflavin synthase from Trichormus variabilis (strain ATCC 29413 / PCC 7937) (Anabaena variabilis).